An 876-amino-acid polypeptide reads, in one-letter code: Alanine--tRNA ligase (876 aa).

K74 is modified (N6-acetyllysine). Zn(2+)-binding residues include H564, H568, C666, and H670.

Belongs to the class-II aminoacyl-tRNA synthetase family. As to quaternary structure, homotetramer. Zn(2+) serves as cofactor.

It is found in the cytoplasm. The catalysed reaction is tRNA(Ala) + L-alanine + ATP = L-alanyl-tRNA(Ala) + AMP + diphosphate. Catalyzes the attachment of alanine to tRNA(Ala) in a two-step reaction: alanine is first activated by ATP to form Ala-AMP and then transferred to the acceptor end of tRNA(Ala). Also edits incorrectly charged Ser-tRNA(Ala) and Gly-tRNA(Ala) via its editing domain. The chain is Alanine--tRNA ligase from Escherichia coli O6:K15:H31 (strain 536 / UPEC).